The following is a 353-amino-acid chain: Chorismate synthase (353 aa).

R48 is an NADP(+) binding site. FMN-binding positions include 125 to 127, 238 to 239, G278, 293 to 297, and R319; these read RSS, NA, and KPTSS.

It belongs to the chorismate synthase family. Homotetramer. The cofactor is FMNH2.

It carries out the reaction 5-O-(1-carboxyvinyl)-3-phosphoshikimate = chorismate + phosphate. It participates in metabolic intermediate biosynthesis; chorismate biosynthesis; chorismate from D-erythrose 4-phosphate and phosphoenolpyruvate: step 7/7. Its function is as follows. Catalyzes the anti-1,4-elimination of the C-3 phosphate and the C-6 proR hydrogen from 5-enolpyruvylshikimate-3-phosphate (EPSP) to yield chorismate, which is the branch point compound that serves as the starting substrate for the three terminal pathways of aromatic amino acid biosynthesis. This reaction introduces a second double bond into the aromatic ring system. The protein is Chorismate synthase of Buchnera aphidicola subsp. Cinara cedri (strain Cc).